We begin with the raw amino-acid sequence, 271 residues long: Putative phosphoenolpyruvate synthase regulatory protein (271 aa).

Gly152 to Thr159 is a binding site for ADP.

This sequence belongs to the pyruvate, phosphate/water dikinase regulatory protein family. PSRP subfamily.

The catalysed reaction is [pyruvate, water dikinase] + ADP = [pyruvate, water dikinase]-phosphate + AMP + H(+). The enzyme catalyses [pyruvate, water dikinase]-phosphate + phosphate + H(+) = [pyruvate, water dikinase] + diphosphate. Functionally, bifunctional serine/threonine kinase and phosphorylase involved in the regulation of the phosphoenolpyruvate synthase (PEPS) by catalyzing its phosphorylation/dephosphorylation. In Thiocapsa roseopersicina, this protein is Putative phosphoenolpyruvate synthase regulatory protein.